The primary structure comprises 514 residues: Acetylcholine receptor subunit gamma (514 aa).

Positions 1-22 are cleaved as a signal peptide; that stretch reads MRCSDLLLLFLLALCVLPGISC. Residues 23 to 241 are Extracellular-facing; that stretch reads RNQEEKLLQD…VIFYLIIQRK (219 aa). Cysteines 150 and 164 form a disulfide. N-linked (GlcNAc...) asparagine glycosylation occurs at asparagine 163. Transmembrane regions (helical) follow at residues 242 to 266, 275 to 293, and 309 to 330; these read PLFYIINIIVPCVLISSMAVLVYFL, CTVSINVLLAQTVFLFLIA, and YLTFLMVVTVVIVVNAVIVLNV. At 331 to 473 the chain is on the cytoplasmic side; it reads SLRTPNTHSM…WILVGRVIDR (143 aa). The residue at position 386 (tyrosine 386) is a Phosphotyrosine; by Tyr-kinases. A helical transmembrane segment spans residues 474–494; sequence VCFFIMASLFVCGTIGIFLMA.

It belongs to the ligand-gated ion channel (TC 1.A.9) family. Acetylcholine receptor (TC 1.A.9.1) subfamily. Gamma/CHRNG sub-subfamily. In terms of assembly, pentamer of two alpha chains, and one each of the beta, delta, and gamma chains.

The protein localises to the postsynaptic cell membrane. Its subcellular location is the cell membrane. It carries out the reaction K(+)(in) = K(+)(out). It catalyses the reaction Na(+)(in) = Na(+)(out). In terms of biological role, after binding acetylcholine, the AChR responds by an extensive change in conformation that affects all subunits and leads to opening of an ion-conducting channel across the plasma membrane. This Gallus gallus (Chicken) protein is Acetylcholine receptor subunit gamma (CHRNG).